The sequence spans 527 residues: ATP synthase subunit alpha (527 aa).

Position 177–184 (177–184 (GDRQTGKT)) interacts with ATP.

It belongs to the ATPase alpha/beta chains family. F-type ATPases have 2 components, CF(1) - the catalytic core - and CF(0) - the membrane proton channel. CF(1) has five subunits: alpha(3), beta(3), gamma(1), delta(1), epsilon(1). CF(0) has four main subunits: a(1), b(1), b'(1) and c(9-12).

It localises to the cell membrane. It carries out the reaction ATP + H2O + 4 H(+)(in) = ADP + phosphate + 5 H(+)(out). Produces ATP from ADP in the presence of a proton gradient across the membrane. The alpha chain is a regulatory subunit. This Roseiflexus sp. (strain RS-1) protein is ATP synthase subunit alpha.